Consider the following 448-residue polypeptide: Ribonuclease J (448 aa).

Residues His81, His83, Asp85, His86, His151, and Asp173 each coordinate Zn(2+). Residue 383-387 coordinates substrate; the sequence is HVSGH. His409 is a binding site for Zn(2+).

It belongs to the metallo-beta-lactamase superfamily. RNA-metabolizing metallo-beta-lactamase-like family. Archaeal RNase J subfamily. As to quaternary structure, forms homodimers on heating to 60 degrees Celsius which may be the active form. Requires Zn(2+) as cofactor.

Its subcellular location is the cytoplasm. Its activity is regulated as follows. Inhibited by imidazole. A 5'-3' exoribonuclease with a strong reference for 5'-monophosphorylated RNA and no endoribonuclease activty. Also has robust 5'-'3 nuclease activity on single-stranded DNA (exodeoxyribonuclease, exoDNase). May be involved in RNA degradation. In Methanocaldococcus jannaschii (strain ATCC 43067 / DSM 2661 / JAL-1 / JCM 10045 / NBRC 100440) (Methanococcus jannaschii), this protein is Ribonuclease J.